The chain runs to 1416 residues: MNIYLRQNSFLVPDFIAVQRNSFSQFLESGLIQEISKRNPITNSTKELELCFYPQYYKLSPPELNAKQSILKNKTYSCRLYIPVKLTNKRTKTLKLQWVVLGNLPLMTKRGHFIINGSPRVIINQMVRSPGVYFKEVSHADQKLTYYADLIAYRGAWLRIELDKKADIWARMKKTPKLPMLILLQALGLNLPTILKSLNYPKFFENLGHDGNFMKQLKKGRVSSRSSSQELSGSFNLSEDVSLRLDDSSKNMGAENVQRAPLQKSTKKATLFGDFSRSSVYCKTQEEALWALYALTHPLKNPDEVTANLGKSFLYRKFMNSRVYDLSPLGRLRLNQKLNLSVNENITTITAQDLLFITNTLINLNYGVGKVDDIDNLKNRRIRTAGELVQNQFGIGLLRLEKIIREKLKQQQTKLSIGSLINTKPINGALREFFGSSPLSQFMDQTNPLAEITHKRRLSSLGPGGVNRETAGMAIRGIHPTHYGRICPIETPEGQNAGLVNSLTIYSRVNPYGFIETPFYKVVKGQVQNSTRPIFFSAYQEEKKLLAPGDIYANKLKYLPKSELPIRKLAEFTRTTREKIDYISVSPLQMISIATSLIPFLEHDDANRALMGSNMQRQAVPLMTAEAPVVGTGLECRVASDSGHVLQAKKSGFVTYSSAEKITILSPVDSTPAVPKLSKGNNSPQHFHESVGGSCKESQSLQAAAEGYLSGVASSSSSKFTGSSFSTISALNDGVLRRALTQKVLTTGTNCSSMLKNQRFFVEPKAQLYTGAQTPVGRVETILQPNHAEGYLSEVETIQQTQNKLPLQVRFGVEAPKSSFDSEATKISSTLNSIPQHPVLGEDSPSKQVGWALKDPQIQTMLKPKWHHSAQTMSRENWYQNLKGQNVKTFTQVESGRLVTKPTNTKMPMSSLAGTANSKKTGEALYKLASSESATKSMDFSTKTQLKPITYELQKLFRSNQDTSIMHRPVVREGEWVNRGDLLADNSTTVGGELSLGKNLLLAYMPWEGYNFEDAILISERLVSDDAYTSLHIERYEVEIRETKFGLEQITSQIPDEGKLSHLDHFGIAKPGTWVEEGDILIGKVAPMPQKNLSRYEKLLYDVVGKKISTTRDTSLRVPRGVSGRVIHVEILNAENLPPEFVFEGPSRVNLYIAEKRKIHVGDKMAGRHGNKGIISNILPRQDMPYLPDGTPLDMVLNPLGVPSRMNVGQIYECLLGLAGRYLGQKFKVRPFDEIYGPQTSRSLVYSKLYEARLRTGQRWLFNPASPGKTRLFDGRTGECFSQPVTVGQAYMLKLIHLVDEKIHARSIGPYSLVTQQPLRGRSKHGGQRLGEMEVWALEGFGAAYTLQELLTVKSDDIKGREQVMESIQKNKTISLGTPESFKVLIRELQSLCLDVGVYAVDGSGKIKQVDTMKLP.

Belongs to the RNA polymerase beta chain family. In plastids the minimal PEP RNA polymerase catalytic core is composed of four subunits: alpha, beta, beta', and beta''. When a (nuclear-encoded) sigma factor is associated with the core the holoenzyme is formed, which can initiate transcription.

It localises to the plastid. The protein resides in the chloroplast. It carries out the reaction RNA(n) + a ribonucleoside 5'-triphosphate = RNA(n+1) + diphosphate. DNA-dependent RNA polymerase catalyzes the transcription of DNA into RNA using the four ribonucleoside triphosphates as substrates. The protein is DNA-directed RNA polymerase subunit beta of Oltmannsiellopsis viridis (Marine flagellate).